Consider the following 323-residue polypeptide: MNNLFSILHNTPLFQEGTIEFYKPLKPLTSYKIGGPAEALFCPKDEDHLKEALIFLSKNKISASLIGGGTNILVSDKGFRGVLISLKNLNKIEIIGESENKVFVRAGAGVLTDKLTKWAVENSLSGLECFGGLPGSVGGAVFMNARCYDVSISDRLKSIKYILADGDKTEFAEYEYNPSDWDYKASPFQQNPVSTEITKNRKIVLSAVFTLTHGIKEEIAVKTEEKVQDRISKGHFKEPSAGSTFKNNRAFGLPSGKLIEDAGLKGLCEGGAQVAPWHGNFIINKHDASASDIKTLIEKVQKTVKDKTGFLLEPEVIFAGDWG.

The FAD-binding PCMH-type domain maps to 33–214 (IGGPAEALFC…LSAVFTLTHG (182 aa)). S243 serves as the catalytic Proton donor. E315 is a catalytic residue.

This sequence belongs to the MurB family. FAD serves as cofactor.

The protein resides in the cytoplasm. It catalyses the reaction UDP-N-acetyl-alpha-D-muramate + NADP(+) = UDP-N-acetyl-3-O-(1-carboxyvinyl)-alpha-D-glucosamine + NADPH + H(+). The protein operates within cell wall biogenesis; peptidoglycan biosynthesis. Cell wall formation. This is UDP-N-acetylenolpyruvoylglucosamine reductase from Treponema denticola (strain ATCC 35405 / DSM 14222 / CIP 103919 / JCM 8153 / KCTC 15104).